The sequence spans 490 residues: ATP synthase subunit beta, chloroplastic (490 aa).

Position 6 is a phosphothreonine (Thr6). Ser13 is subject to Phosphoserine. 172–179 (GGAGVGKT) contributes to the ATP binding site.

This sequence belongs to the ATPase alpha/beta chains family. As to quaternary structure, F-type ATPases have 2 components, CF(1) - the catalytic core - and CF(0) - the membrane proton channel. CF(1) has five subunits: alpha(3), beta(3), gamma(1), delta(1), epsilon(1). CF(0) has four main subunits: a(1), b(1), b'(1) and c(9-12).

The protein localises to the plastid. The protein resides in the chloroplast thylakoid membrane. It carries out the reaction ATP + H2O + 4 H(+)(in) = ADP + phosphate + 5 H(+)(out). Produces ATP from ADP in the presence of a proton gradient across the membrane. The catalytic sites are hosted primarily by the beta subunits. The sequence is that of ATP synthase subunit beta, chloroplastic from Aethionema cordifolium (Lebanon stonecress).